An 89-amino-acid polypeptide reads, in one-letter code: Acylphosphatase (89 aa).

An Acylphosphatase-like domain is found at 3-89 (RKEFLVSGRV…DTREKRFSTY (87 aa)). Residues Arg-18 and Asn-36 contribute to the active site.

Belongs to the acylphosphatase family.

It catalyses the reaction an acyl phosphate + H2O = a carboxylate + phosphate + H(+). The sequence is that of Acylphosphatase (acyP) from Clostridium perfringens (strain ATCC 13124 / DSM 756 / JCM 1290 / NCIMB 6125 / NCTC 8237 / Type A).